We begin with the raw amino-acid sequence, 77 residues long: Conodipine-M alpha chain (77 aa).

Gln1 bears the Pyrrolidone carboxylic acid mark. His36 is an active-site residue.

In terms of assembly, heterodimer of an alpha and a beta chains; probably disulfide-linked. Requires Ca(2+) as cofactor. As to expression, expressed by the venom duct.

It is found in the secreted. The enzyme catalyses a 1,2-diacyl-sn-glycero-3-phosphocholine + H2O = a 1-acyl-sn-glycero-3-phosphocholine + a fatty acid + H(+). With respect to regulation, inhibited by linoleoyl amide and MG14. In terms of biological role, heterodimer: conodipine-M catalyzes the calcium-dependent hydrolysis of the 2-acyl groups in 3-sn-phosphoglycerides. This activity may be supported by the alpha chain. Conodipine-M inhibits the binding of isradipine (a ligand specific for L-type calcium channel) to L-type calcium channels. This Conus magus (Magical cone) protein is Conodipine-M alpha chain.